The following is a 354-amino-acid chain: Polyribonucleotide 5'-hydroxyl-kinase PYRAB01840 (354 aa).

Residue 36-43 (GDVDTGKT) participates in ATP binding.

The cofactor is a divalent metal cation.

It catalyses the reaction a 5'-end dephospho-2'-deoxyribonucleoside-DNA + ATP = a 5'-end 5'-phospho-2'-deoxyribonucleoside-DNA + ADP + H(+). The enzyme catalyses a 5'-end dephospho-ribonucleoside-RNA + ATP = a 5'-end 5'-phospho-ribonucleoside-RNA + ADP + H(+). Functionally, polynucleotide kinase that can phosphorylate the 5'-hydroxyl groups of both single-stranded RNA (ssRNA) and single-stranded DNA (ssDNA). Exhibits a strong preference for ssRNA. In Pyrococcus abyssi (strain GE5 / Orsay), this protein is Polyribonucleotide 5'-hydroxyl-kinase PYRAB01840.